The chain runs to 604 residues: DNA polymerase alpha subunit B (604 aa).

Positions 109-171 (ETLLNSYTTP…KYSSRSNRGE (63 aa)) are disordered. Polar residues predominate over residues 113–141 (NSYTTPSKGSQKRTITTPETPLTKRSVSA). Residues T129 and T132 each carry the phosphothreonine modification. Phosphoserine occurs at positions 143, 149, 154, and 156. Low complexity predominate over residues 143–160 (SPHQLLSPSSFSPSATPP).

It belongs to the DNA polymerase alpha subunit B family. Component of the alpha DNA polymerase complex (also known as the alpha DNA polymerase-primase complex) consisting of four subunits: the catalytic subunit POLA1, the regulatory subunit POLA2, and the primase complex subunits PRIM1 and PRIM2 respectively. Within the complex, POLA1 directly interacts with PRIM2. Phosphorylated in a cell cycle-dependent manner, in G2/M phase.

The protein resides in the nucleus. Functionally, accessory subunit of the DNA polymerase alpha complex (also known as the alpha DNA polymerase-primase complex) which plays an essential role in the initiation of DNA synthesis. During the S phase of the cell cycle, the DNA polymerase alpha complex (composed of a catalytic subunit POLA1, an accessory subunit POLA2 and two primase subunits, the catalytic subunit PRIM1 and the regulatory subunit PRIM2) is recruited to DNA at the replicative forks via direct interactions with MCM10 and WDHD1. The primase subunit of the polymerase alpha complex initiates DNA synthesis by oligomerising short RNA primers on both leading and lagging strands. These primers are initially extended by the polymerase alpha catalytic subunit and subsequently transferred to polymerase delta and polymerase epsilon for processive synthesis on the lagging and leading strand, respectively. In Bos taurus (Bovine), this protein is DNA polymerase alpha subunit B (POLA2).